A 287-amino-acid polypeptide reads, in one-letter code: Myogenin (287 aa).

Ser-77 and Ser-79 each carry phosphoserine; by CaMK2G. Residues 81-132 (DRRRAATLREKRRLKKVNEAFEALKRSTLLNPNQRLPKVEILRSAIQYIERL) enclose the bHLH domain. At Thr-87 the chain carries Phosphothreonine; by CaMK2G.

Homodimer and heterodimer with E12; heterodimerization enhances MYOG DNA-binding and transcriptional activities. Interacts with SMARCA4/BRG1/BAF190A. Interacts (via C-terminal region) with SSRP1 and SUPT16H; the interaction is indicative of an interaction with the FACT complex. Interacts with CSRP3. In terms of processing, phosphorylated by CAMK2G on threonine and serine amino acids in a muscle activity-dependent manner. Phosphorylation of Thr-87 impairs both DNA-binding and trans-activation functions in contracting muscles. As to expression, expressed in muscle (at protein level).

It is found in the nucleus. In terms of biological role, acts as a transcriptional activator that promotes transcription of muscle-specific target genes and plays a role in muscle differentiation, cell cycle exit and muscle atrophy. Essential for the development of functional embryonic skeletal fiber muscle differentiation. However is dispensable for postnatal skeletal muscle growth; phosphorylation by CAMK2G inhibits its transcriptional activity in respons to muscle activity. Required for the recruitment of the FACT complex to muscle-specific promoter regions, thus promoting gene expression initiation. During terminal myoblast differentiation, plays a role as a strong activator of transcription at loci with an open chromatin structure previously initiated by MYOD1. Together with MYF5 and MYOD1, co-occupies muscle-specific gene promoter core regions during myogenesis. Also cooperates with myocyte-specific enhancer factor MEF2D and BRG1-dependent recruitment of SWI/SNF chromatin-remodeling enzymes to alter chromatin structure at myogenic late gene promoters. Facilitates cell cycle exit during terminal muscle differentiation through the up-regulation of miR-20a expression, which in turn represses genes involved in cell cycle progression. Binds to the E-box containing (E1) promoter region of the miR-20a gene. Also plays a role in preventing reversal of muscle cell differentiation. Contributes to the atrophy-related gene expression in adult denervated muscles. Induces fibroblasts to differentiate into myoblasts. The polypeptide is Myogenin (Myog) (Rattus norvegicus (Rat)).